A 955-amino-acid polypeptide reads, in one-letter code: Sex determination protein fruitless (955 aa).

Disordered stretches follow at residues 1–55 (MMAT…HAHS) and 70–89 (IETDVRAPPPPLPPPPLPLP). Basic residues predominate over residues 35-55 (PHGHGHLHSHAHAHGHGHAHS). The segment covering 76-89 (APPPPLPPPPLPLP) has biased composition (pro residues). One can recognise a BTB domain in the interval 131–196 (CDVTLACEGE…MYKGEVNVGQ (66 aa)). Disordered regions lie at residues 229–288 (LRDS…SMSE), 352–526 (NRSA…LGGG), and 784–814 (ANHQLHQHPPSATHPSHSQSSPHYPSASGAG). Residues 233 to 246 (AASSPTGRGPSNYT) are compositionally biased toward polar residues. Composition is skewed to basic and acidic residues over residues 258–279 (AMRESRDSLRSRCERDLRDELT) and 360–379 (CSDRGSERGTLERTDSRDDL). A compositionally biased stretch (low complexity) spans 387–420 (KDNNNSNSSSTGGNNNNNNNNNNNSSSNNNNSSS). The segment covering 421–446 (NRERNNSGERERERERERERDRDREL) has biased composition (basic and acidic residues). Low complexity-rich tracts occupy residues 464–475 (SSSNCDNSLSSS) and 790–814 (QHPPSATHPSHSQSSPHYPSASGAG). Residues 918 to 941 (HECPVCGQKFTRRDNMKAHCKIKH) form a C2H2-type zinc finger.

Expressed in parts of the adult male brain associated with the courtship song and steps of the male courtship. Also expressed in the larval and pupal male mushroom body and optic lobe. Expressed in pupal female optic lobe.

The protein resides in the nucleus. Functionally, probably acts as a transcriptional regulator. Part of the somatic sex determination hierarchy; sex determination genes transformer (tra) and transformer-2 (tra-2) switch fru splicing from the male-specific pattern to the female-specific pattern through activation of the female-specific fru 5'-splice site. Vital for the development of males and females. Controls the development of the male specific abdominal muscle of Lawrence. Plays a role in male courtship behavior and sexual orientation. Enhances male-specific expression of takeout in brain-associated fat body. The chain is Sex determination protein fruitless (fru) from Drosophila melanogaster (Fruit fly).